Consider the following 47-residue polypeptide: Photosystem II reaction center protein K (47 aa).

Positions 1-10 (MALINFDLLA) are excised as a propeptide. Residues 26-46 (LPLIPLFFFLLVFVWQAAVGF) form a helical membrane-spanning segment.

The protein belongs to the PsbK family. In terms of assembly, PSII is composed of 1 copy each of membrane proteins PsbA, PsbB, PsbC, PsbD, PsbE, PsbF, PsbH, PsbI, PsbJ, PsbK, PsbL, PsbM, PsbT, PsbX, PsbY, Psb30/Ycf12, peripheral proteins PsbO, CyanoQ (PsbQ), PsbU, PsbV and a large number of cofactors. It forms dimeric complexes.

The protein localises to the cellular thylakoid membrane. Its function is as follows. One of the components of the core complex of photosystem II (PSII). PSII is a light-driven water:plastoquinone oxidoreductase that uses light energy to abstract electrons from H(2)O, generating O(2) and a proton gradient subsequently used for ATP formation. It consists of a core antenna complex that captures photons, and an electron transfer chain that converts photonic excitation into a charge separation. The protein is Photosystem II reaction center protein K of Prochlorococcus marinus (strain NATL1A).